A 187-amino-acid chain; its full sequence is Elongation factor P (187 aa).

It belongs to the elongation factor P family.

It localises to the cytoplasm. It functions in the pathway protein biosynthesis; polypeptide chain elongation. Involved in peptide bond synthesis. Stimulates efficient translation and peptide-bond synthesis on native or reconstituted 70S ribosomes in vitro. Probably functions indirectly by altering the affinity of the ribosome for aminoacyl-tRNA, thus increasing their reactivity as acceptors for peptidyl transferase. The chain is Elongation factor P from Treponema denticola (strain ATCC 35405 / DSM 14222 / CIP 103919 / JCM 8153 / KCTC 15104).